We begin with the raw amino-acid sequence, 301 residues long: Protein FdhE homolog (301 aa).

The protein belongs to the FdhE family.

The protein localises to the cytoplasm. Functionally, necessary for formate dehydrogenase activity. The polypeptide is Protein FdhE homolog (Shewanella baltica (strain OS185)).